The following is a 730-amino-acid chain: Rap1 GTPase-activating protein 2 (730 aa).

The region spanning 247-463 (IVAYDEHEVN…RTRAALLDNL (217 aa)) is the Rap-GAP domain. Disordered stretches follow at residues 510–668 (MVGS…STAS) and 698–730 (SRSP…STSH). Composition is skewed to polar residues over residues 535 to 557 (GEVT…QSRS) and 597 to 612 (HSSQ…NPSS). Residues 617–630 (PNKDRPFVKLKENG) show a composition bias toward basic and acidic residues. Over residues 631-651 (RSNISRSSSSTSSFSSTAGES) the composition is skewed to low complexity. Polar residues predominate over residues 699 to 712 (RSPTDIKNRNSPRS).

It is found in the cytoplasm. Its function is as follows. GTPase activator for the nuclear Ras-related regulatory protein RAP-1A (KREV-1), converting it to the putatively inactive GDP-bound state. The protein is Rap1 GTPase-activating protein 2 (RAP1GAP2) of Gallus gallus (Chicken).